A 418-amino-acid chain; its full sequence is Endoglucanase EG-II (418 aa).

The N-terminal stretch at 1 to 21 is a signal peptide; the sequence is MNKSVAPLLLAASILYGGAAA. A Pyrrolidone carboxylic acid modification is found at glutamine 22. In terms of domain architecture, CBM1 spans 22-57; it reads QQTVWGQCGGIGWSGPTNCAPGSACSTLNPYYAQCI. The segment at 58–91 is linker; sequence PGATTITTSTRPPSGPTTTTRATSTSSSTPPTSS. The interval 63 to 91 is disordered; that stretch reads ITTSTRPPSGPTTTTRATSTSSSTPPTSS. The segment at 92 to 418 is catalytic; it reads GVRFAGVNIA…SLVSSCLARK (327 aa). A disulfide bridge connects residues cysteine 107 and cysteine 113. Asparagine 124 is a glycosylation site (N-linked (GlcNAc) asparagine). Cysteine 183 and cysteine 190 form a disulfide bridge. The active-site Proton donor/acceptor is the glutamate 239. Disulfide bonds link cysteine 323–cysteine 359 and cysteine 364–cysteine 414. Glutamate 350 functions as the Nucleophile in the catalytic mechanism.

Belongs to the glycosyl hydrolase 5 (cellulase A) family.

It is found in the secreted. It catalyses the reaction Endohydrolysis of (1-&gt;4)-beta-D-glucosidic linkages in cellulose, lichenin and cereal beta-D-glucans.. In terms of biological role, endoglucanase (EG) that cleaves the internal beta-1,4-glucosidic bonds in cellulose. The degradation of cellulose involves an interplay between different cellulolytic enzymes. Hydrolysis starts with EGs, which cut internal glycosidic linkages to reduce the polymerization degree of the substrate and creates new chain ends for exocellobiohydrolases (CBHs). The CBH release the disaccharide cellobiose from the non-reducing end of the cellulose polymer chain. Finally, beta-1,4-glucosidases hydrolyze the cellobiose and other short cello-oligosaccharides into glucose units. This chain is Endoglucanase EG-II (egl2), found in Hypocrea jecorina (strain ATCC 56765 / BCRC 32924 / NRRL 11460 / Rut C-30) (Trichoderma reesei).